The primary structure comprises 562 residues: MKKSLKGLTGLIVAFALATLLFLYWPLYQRSVPKANNDTPVDVVLIGGGIMSVTLGTYLQELQPDWKIELFERLNGIAQESSDGWNNAGTGHSAFAELNYTPELQDGTIEIKRAIKIAEQFEISREFWSHQVRHGRLPAPTEFINATPHMSFVWGEDRIEYLRKRHNALIKNPLFYGMQFSTDPAVIQQWAPLLMEGRTQDQKVAATYMPLGTDVNFGVITRDLAKHLQDSQNFALHLDHEVTALRQNPDKTWNVTVKDLNNGQERSIKSRFVFIGAGGAALKLLQLSGIPESKDYAGFPVGGQFLSFENTAITKRHNVKAYGMAESGSPPMSVPHLDARKLDGKSIVLFGPFALYSTKFLKNGSWFDLYSSVNHHNAAGMLSVGKNNIDLVKYLMKQATLTDADRHAELLKYFPNAKPTDWTLVTAGQRVQIIKRDPEKGMILQFGTEIVMDKDHTLATLLGASPGASTSPSIMLDLLAKAFPQQMKNGWETQLKKIIPSYGQHINDSPALTNKIRRMTSETLSLPYLEVPDKSATPTDPTIAPKHQHSTTHNANSEMQAL.

Positions 530-562 (EVPDKSATPTDPTIAPKHQHSTTHNANSEMQAL) are disordered. Positions 551 to 562 (TTHNANSEMQAL) are enriched in polar residues.

It belongs to the MQO family. It depends on FAD as a cofactor.

It carries out the reaction (S)-malate + a quinone = a quinol + oxaloacetate. Its pathway is carbohydrate metabolism; tricarboxylic acid cycle; oxaloacetate from (S)-malate (quinone route): step 1/1. The sequence is that of Probable malate:quinone oxidoreductase from Xylella fastidiosa (strain M12).